A 1057-amino-acid chain; its full sequence is mRNA export factor elf1 (1057 aa).

ABC transporter domains are found at residues 440–659 (IEEE…VKPE) and 692–1019 (LKMT…KKKL). ATP contacts are provided by residues 477 to 484 (GHNGCGKS) and 726 to 733 (GPNGAGKS). At serine 733 the chain carries Phosphoserine. One can recognise a Chromo domain in the interval 820 to 869 (RRVEALIGRQKLKKSFQYEIKWFGKPHKYNTWVSREILLENGFQKFVQAF). A compositionally biased stretch (basic and acidic residues) spans 1020–1036 (TRNEIKAKERRAREREL). Residues 1020-1057 (TRNEIKAKERRARERELAWLQSPKGTEKPKSFFSDDEE) form a disordered region. Serine 1041 and serine 1053 each carry phosphoserine.

It belongs to the ABC transporter superfamily. ABCF family. EF3 subfamily.

The protein localises to the cytoplasm. It localises to the nucleus. Its function is as follows. Has a direct role in the mRNA export process. Appears to act within the rae1 mediated mRNA export pathway. In Schizosaccharomyces pombe (strain 972 / ATCC 24843) (Fission yeast), this protein is mRNA export factor elf1 (elf1).